A 440-amino-acid polypeptide reads, in one-letter code: Glutamate-1-semialdehyde 2,1-aminomutase (440 aa).

An N6-(pyridoxal phosphate)lysine modification is found at Lys-273.

Belongs to the class-III pyridoxal-phosphate-dependent aminotransferase family. HemL subfamily. In terms of assembly, homodimer. Pyridoxal 5'-phosphate serves as cofactor.

The protein resides in the cytoplasm. The enzyme catalyses (S)-4-amino-5-oxopentanoate = 5-aminolevulinate. It functions in the pathway porphyrin-containing compound metabolism; protoporphyrin-IX biosynthesis; 5-aminolevulinate from L-glutamyl-tRNA(Glu): step 2/2. The protein is Glutamate-1-semialdehyde 2,1-aminomutase of Alkaliphilus metalliredigens (strain QYMF).